A 352-amino-acid polypeptide reads, in one-letter code: Quinolinate synthase (352 aa).

Positions 48 and 69 each coordinate iminosuccinate. Cysteine 114 is a [4Fe-4S] cluster binding site. Iminosuccinate is bound by residues 140-142 (YAN) and serine 157. Cysteine 201 contacts [4Fe-4S] cluster. Iminosuccinate contacts are provided by residues 227–229 (HPE) and threonine 244. Cysteine 298 provides a ligand contact to [4Fe-4S] cluster.

Belongs to the quinolinate synthase family. Type 1 subfamily. [4Fe-4S] cluster is required as a cofactor.

The protein resides in the cytoplasm. The catalysed reaction is iminosuccinate + dihydroxyacetone phosphate = quinolinate + phosphate + 2 H2O + H(+). The protein operates within cofactor biosynthesis; NAD(+) biosynthesis; quinolinate from iminoaspartate: step 1/1. Its function is as follows. Catalyzes the condensation of iminoaspartate with dihydroxyacetone phosphate to form quinolinate. In Pseudomonas fluorescens (strain Pf0-1), this protein is Quinolinate synthase.